A 210-amino-acid chain; its full sequence is Small ribosomal subunit protein eS8y (210 aa).

A disordered region spans residues 1–22; that stretch reads MGISRDSIHKRRATGGKQKMWR. Residues 8 to 22 show a composition bias toward basic residues; that stretch reads IHKRRATGGKQKMWR.

It belongs to the eukaryotic ribosomal protein eS8 family.

In Arabidopsis thaliana (Mouse-ear cress), this protein is Small ribosomal subunit protein eS8y (RPS8B).